Here is an 862-residue protein sequence, read N- to C-terminus: MNMAIQTIKYIFWLLPILGLTQALLQNPGDDFPFSTVIDILSENVEFSTFLRIIQKTGHVQYLNELQNFTLFAPINSAFIKGDQTTDQFEEHFHIEDFLIHDRVLQVRDLENGTYLEKRAAKAPLLLRKHERHCFVNEIAVVEPDLLPSFQNASLQGINNLLLIQPQINELLVQLDEETQDLKIFSDFISSFSNYNAYTNSSTVLVPLDVNFRKFFNTIEINYLLDKYNKLGKSNTISQAKWAADRTSLLQELIIDDVYGGILPKELILENKNNRKLFMKSNSEGTSVSVNNSDYSPISNRIFEIGVVHGFSDLDFLRTHIQFDAEKYLHGLNCSEFVKELYFRDLEKFIQNGRKITIFVPQASFNEDRGYTKPSLLYHFVEGKIDLEQDFSSLRPIQYAPTQIYDSAFCSSAKRLGGHCQKFKITRSNKGYYINGRFKILNTKPYEIGNTSIYSIDDDLQLPGDLVLSLAPENHCSISLMLLKELNLLDLPSNHKGYTILLPCMNSWDNNDLTIDYLRSNKTALNLLMRNLIFEDLIYSNNYSISTTVKNLYGNSVSIGVQKIVGSQNLTKISVSTIKESIIIEESSDIFFNQGVIHPIDQLDFPVDLEISLKELIETTGTKEIFDFFNLFYDLSSIIWNNEEYSLLVPTASSIPLSGITANSTNLRKFLELHLIPANVTQNLLDCNGSISTKLGTKLNCRKDHLDNVFVSIQGDWTKEVRVLKTGCTTNLKSSCIFLIDKPISLSWLNSEKYHLRLPGIAVGFGVIIGVTIAISLLFCIIITRGGKVKDKNQRGRNDRATTPLIQHSPIIHNPSYSATAHLSPLSQPTFEGSYSVNAIQTPRDIRRVGSDQKGGRSVSTS.

A signal peptide spans 1–23 (MNMAIQTIKYIFWLLPILGLTQA). Over 24–762 (LLQNPGDDFP…KYHLRLPGIA (739 aa)) the chain is Vacuolar. The 129-residue stretch at 34–162 (FSTVIDILSE…ASLQGINNLL (129 aa)) folds into the FAS1 1 domain. 13 N-linked (GlcNAc...) asparagine glycosylation sites follow: asparagine 68, asparagine 112, asparagine 152, asparagine 200, asparagine 291, asparagine 333, asparagine 450, asparagine 521, asparagine 542, asparagine 569, asparagine 663, asparagine 679, and asparagine 688. FAS1 domains lie at 463-604 (PGDL…DQLD) and 606-744 (PVDL…DKPI). Residues 763–783 (VGFGVIIGVTIAISLLFCIII) form a helical membrane-spanning segment. Topologically, residues 784–862 (TRGGKVKDKN…QKGGRSVSTS (79 aa)) are cytoplasmic.

It is found in the vacuole membrane. This Saccharomyces cerevisiae (strain ATCC 204508 / S288c) (Baker's yeast) protein is FAS1 domain-containing protein YLR001C.